A 234-amino-acid polypeptide reads, in one-letter code: Ribose-5-phosphate isomerase A (234 aa).

Substrate contacts are provided by residues 34–37 (TGST), 90–93 (DGAD), and 103–106 (KGGG). Glutamate 112 functions as the Proton acceptor in the catalytic mechanism. Lysine 130 is a substrate binding site.

This sequence belongs to the ribose 5-phosphate isomerase family. In terms of assembly, homodimer.

The catalysed reaction is aldehydo-D-ribose 5-phosphate = D-ribulose 5-phosphate. It participates in carbohydrate degradation; pentose phosphate pathway; D-ribose 5-phosphate from D-ribulose 5-phosphate (non-oxidative stage): step 1/1. Functionally, catalyzes the reversible conversion of ribose-5-phosphate to ribulose 5-phosphate. The sequence is that of Ribose-5-phosphate isomerase A from Methanosarcina acetivorans (strain ATCC 35395 / DSM 2834 / JCM 12185 / C2A).